Here is a 77-residue protein sequence, read N- to C-terminus: U8-lycotoxin-Ls1p (77 aa).

Residues 1–20 (MKLMIFTGLVLFAIVSLIEA) form the signal peptide. A propeptide spanning residues 21–26 (QAENEK) is cleaved from the precursor.

It belongs to the neurotoxin 19 (CSTX) family. 08 (U8-Lctx) subfamily. In terms of processing, contains 4 disulfide bonds. As to expression, expressed by the venom gland.

It localises to the secreted. The chain is U8-lycotoxin-Ls1p from Lycosa singoriensis (Wolf spider).